We begin with the raw amino-acid sequence, 790 residues long: E3 ubiquitin-protein ligase Jade-2 (790 aa).

2 disordered regions span residues 1–52 and 111–130; these read MEEK…PSEV and GPPAQASPSSTMLGEGSQPD. Ser9 and Ser15 each carry phosphoserine. Low complexity predominate over residues 9-28; that stretch reads SISSDNSDTTDSHATSTSAS. N6-acetyllysine is present on residues Lys32 and Lys38. Ser117 carries the post-translational modification Phosphoserine. Residues 199-249 form a PHD-type 1 zinc finger; it reads DVVCDVCRSPEGEDGNEMVFCDKCNVCVHQACYGILKVPTGSWLCRTCALG. The C2HC pre-PHD-type zinc-finger motif lies at 251–285; the sequence is QPKCLLCPKRGGALKPTRSGTKWVHVSCALWIPEV. The residue at position 298 (Lys298) is an N6-acetyllysine. A PHD-type 2 zinc finger spans residues 309–365; that stretch reads LSCSLCKECTGTCIQCSMPSCVTAFHVTCAFDHGLEMRTILADNDEVKFKSFCQEHS. Disordered regions lie at residues 361 to 386 and 578 to 777; these read CQEHSDGGPRNEPTSEPTEPSQAGED and SFMR…PREA. The segment covering 372–381 has biased composition (polar residues); the sequence is EPTSEPTEPS. A compositionally biased stretch (basic residues) spans 593-606; that stretch reads KARGRTRLPAKKKP. A compositionally biased stretch (low complexity) spans 684-693; the sequence is AASVAADSDV. The span at 737–747 shows a compositional bias: basic and acidic residues; sequence ERPKVSLHFDT. Positions 757 to 767 are enriched in acidic residues; that stretch reads EMSDSDVEAED.

The protein belongs to the JADE family. As to quaternary structure, component of the HBO1 complex composed at least of ING4 or ING5, MYST2/HBO1, MEAF6, and one of JADE1, JADE2 and JADE3. Interacts (via C-terminus) with KDM1A (via AOD/Tower domain).

The enzyme catalyses S-ubiquitinyl-[E2 ubiquitin-conjugating enzyme]-L-cysteine + [acceptor protein]-L-lysine = [E2 ubiquitin-conjugating enzyme]-L-cysteine + N(6)-ubiquitinyl-[acceptor protein]-L-lysine.. The protein operates within protein modification; protein ubiquitination. Its function is as follows. Scaffold subunit of some HBO1 complexes, which have a histone H4 acetyltransferase activity. Acts as an E3 ubiquitin-protein ligase mediating the ubiquitination and subsequent proteasomal degradation of target protein histone demethylase KDM1A. Also acts as a ubiquitin ligase E3 toward itself. Positive regulator of neurogenesis. The sequence is that of E3 ubiquitin-protein ligase Jade-2 (JADE2) from Homo sapiens (Human).